Reading from the N-terminus, the 56-residue chain is Small ribosomal subunit protein uS14 (56 aa).

Zn(2+) contacts are provided by cysteine 21, cysteine 24, cysteine 39, and cysteine 42.

Belongs to the universal ribosomal protein uS14 family. Zinc-binding uS14 subfamily. In terms of assembly, part of the 30S ribosomal subunit. It depends on Zn(2+) as a cofactor.

In terms of biological role, binds 16S rRNA, required for the assembly of 30S particles. The polypeptide is Small ribosomal subunit protein uS14 (Pyrococcus furiosus (strain ATCC 43587 / DSM 3638 / JCM 8422 / Vc1)).